Reading from the N-terminus, the 664-residue chain is Transketolase 1 (664 aa).

H26 is a substrate binding site. Thiamine diphosphate contacts are provided by residues H66 and 114–116; that span reads GPL. Position 155 (D155) interacts with Mg(2+). Positions 156 and 185 each coordinate thiamine diphosphate. N185 and I187 together coordinate Mg(2+). Positions 260, 357, and 384 each coordinate substrate. Position 260 (H260) interacts with thiamine diphosphate. The active-site Proton donor is the E411. F437 provides a ligand contact to thiamine diphosphate. Residues H461, D469, and R520 each contribute to the substrate site.

It belongs to the transketolase family. Homodimer. The cofactor is Mg(2+). Requires Ca(2+) as cofactor. Mn(2+) serves as cofactor. It depends on Co(2+) as a cofactor. Thiamine diphosphate is required as a cofactor.

It carries out the reaction D-sedoheptulose 7-phosphate + D-glyceraldehyde 3-phosphate = aldehydo-D-ribose 5-phosphate + D-xylulose 5-phosphate. In terms of biological role, catalyzes the transfer of a two-carbon ketol group from a ketose donor to an aldose acceptor, via a covalent intermediate with the cofactor thiamine pyrophosphate. In Aliivibrio fischeri (strain ATCC 700601 / ES114) (Vibrio fischeri), this protein is Transketolase 1 (tkt1).